Reading from the N-terminus, the 193-residue chain is Thymidine kinase (193 aa).

ATP-binding positions include 9 to 16 (STMNAGKS) and 87 to 90 (DEAN). Glu-88 acts as the Proton acceptor in catalysis. 4 residues coordinate Zn(2+): Cys-145, Cys-147, Cys-182, and His-185.

The protein belongs to the thymidine kinase family. As to quaternary structure, homotetramer.

It localises to the cytoplasm. The enzyme catalyses thymidine + ATP = dTMP + ADP + H(+). This Agrobacterium fabrum (strain C58 / ATCC 33970) (Agrobacterium tumefaciens (strain C58)) protein is Thymidine kinase.